Reading from the N-terminus, the 875-residue chain is Protein HIR2 (875 aa).

WD repeat units lie at residues 10-47, 118-158, 163-201, 237-277, 278-316, and 320-359; these read IHNE…DTAF, KSPS…KLSE, KASK…THKL, PNNA…PAFY, EKPN…PLFN, and VSST…LGVA. Positions 398 to 473 are disordered; that stretch reads ESASAAPIPN…IAPGSKKQKK (76 aa). Residues 424 to 446 are compositionally biased toward polar residues; that stretch reads ANNQTNGIKTIQSTSMEFNTPSY. WD repeat units lie at residues 546–587 and 589–626; these read LFQD…LMAP and VLGV…LAFP. Position 713 is a phosphoserine (Ser713).

Belongs to the WD repeat HIR1 family. In terms of assembly, component of the HIR complex, composed of HIR1, HIR2, HIR3 and HPC2. This complex may consist of one copy of HIR1 and HIR3 and two copies of HIR2 and HPC2. The HIR complex interacts with ASF1. Interacts with SNF2. Interacts with SNF5. Interacts with SWI3. Interacts with RTT106.

It localises to the nucleus. It is found in the chromosome. Its function is as follows. Component of the HIR complex, which cooperates with ASF1 to promote replication-independent chromatin assembly. The HIR complex is also required for the periodic repression of three of the four histone gene loci during the cell cycle as well as for autogenous regulation of the HTA1-HTB1 locus by H2A and H2B. DNA-binding by the HIR complex may repress transcription by inhibiting nucleosome remodeling by the SWI/SNF complex. The HIR complex may also be required for transcriptional silencing of centromeric, telomeric and mating-type loci in the absence of CAF-1. The polypeptide is Protein HIR2 (HIR2) (Saccharomyces cerevisiae (strain ATCC 204508 / S288c) (Baker's yeast)).